We begin with the raw amino-acid sequence, 353 residues long: Photosystem II D2 protein (353 aa).

Residue Thr-2 is modified to N-acetylthreonine. Thr-2 is modified (phosphothreonine). The chain crosses the membrane as a helical span at residues 41–61 (CAYFALGGWFTGTTFVTSWYT). His-118 lines the chlorophyll a pocket. The chain crosses the membrane as a helical span at residues 125–141 (GFMLRQFELARSVQLRP). Positions 130 and 143 each coordinate pheophytin a. The helical transmembrane segment at 153 to 166 (VFVSVFLIYPLGQS) threads the bilayer. Chlorophyll a is bound at residue His-198. A helical transmembrane segment spans residues 208-228 (AALLCAIHGATVENTLFEDGD). The a plastoquinone site is built by His-215 and Phe-262. Position 215 (His-215) interacts with Fe cation. His-269 provides a ligand contact to Fe cation. The chain crosses the membrane as a helical span at residues 279–295 (GLWMSALGVVGLALNLR).

The protein belongs to the reaction center PufL/M/PsbA/D family. In terms of assembly, PSII is composed of 1 copy each of membrane proteins PsbA, PsbB, PsbC, PsbD, PsbE, PsbF, PsbH, PsbI, PsbJ, PsbK, PsbL, PsbM, PsbT, PsbX, PsbY, PsbZ, Psb30/Ycf12, at least 3 peripheral proteins of the oxygen-evolving complex and a large number of cofactors. It forms dimeric complexes. Requires The D1/D2 heterodimer binds P680, chlorophylls that are the primary electron donor of PSII, and subsequent electron acceptors. It shares a non-heme iron and each subunit binds pheophytin, quinone, additional chlorophylls, carotenoids and lipids. There is also a Cl(-1) ion associated with D1 and D2, which is required for oxygen evolution. The PSII complex binds additional chlorophylls, carotenoids and specific lipids. as cofactor.

It is found in the plastid. Its subcellular location is the chloroplast thylakoid membrane. It catalyses the reaction 2 a plastoquinone + 4 hnu + 2 H2O = 2 a plastoquinol + O2. Its function is as follows. Photosystem II (PSII) is a light-driven water:plastoquinone oxidoreductase that uses light energy to abstract electrons from H(2)O, generating O(2) and a proton gradient subsequently used for ATP formation. It consists of a core antenna complex that captures photons, and an electron transfer chain that converts photonic excitation into a charge separation. The D1/D2 (PsbA/PsbD) reaction center heterodimer binds P680, the primary electron donor of PSII as well as several subsequent electron acceptors. D2 is needed for assembly of a stable PSII complex. This is Photosystem II D2 protein from Pelargonium hortorum (Common geranium).